The sequence spans 339 residues: MRRVTLFLNGSPSNGKVVAVYGTLSDLLSVASSKLGIKATSVYNGKGGLIDDIALIRDDDVLFVCEGEPFIDPQTDARPPGGLLGSHTDWLTLNVGGRYFTTTRSTLVNKEPDSMLAHMFKDKGVWGNKQDHRGAFLIDRSPEYFEPILNYLRHGQLIVNDGINLLGVLEEARFFGIDSLIEHLEVAIKNSQPPEDHSPISRKEFVRFLLATPTKSELRCQCANLQGVKMLCSNAEGASLRLCNFEDPSGLKANLEGANLKGVDMEGSQMTGINLRVATLKNAKLKNCNLRGATLAGTDLENCDLSGCDLQEANLRGSNVKGAIFEEMLTPLHMSQSVR.

The 80-residue stretch at 3 to 82 (RVTLFLNGSP…PQTDARPPGG (80 aa)) folds into the KHA domain. Residue S11 is modified to Phosphoserine. One can recognise a BTB domain in the interval 89-161 (DWLTLNVGGR…LRHGQLIVND (73 aa)). Pentapeptide repeat domains lie at 223 to 247 (ANLQGVKMLCSNAEGASLRLCNFED), 253 to 292 (ANLEGANLKGVDMEGSQMTGINLRVATLKNAKLKNCNLRG), and 293 to 327 (ATLAGTDLENCDLSGCDLQEANLRGSNVKGAIFEE).

Forms pentamers. Component of a complex mades of five KCTD9 and five CUL3 subunits.

Its pathway is protein modification; protein ubiquitination. Substrate-specific adapter of a BCR (BTB-CUL3-RBX1) E3 ubiquitin-protein ligase complex, which mediates the ubiquitination of target proteins, leading to their degradation by the proteasome. The protein is BTB/POZ domain-containing protein KCTD9 (Kctd9) of Mus musculus (Mouse).